The chain runs to 314 residues: Olfactory receptor-like protein I9 (314 aa).

Over 1-25 (MTRRNQTAISQFFLLGLPFPPEYQH) the chain is Extracellular. Residue Asn-5 is glycosylated (N-linked (GlcNAc...) asparagine). The helical transmembrane segment at 26 to 50 (LFYALFLAMYLTTLLGNLIIIILIL) threads the bilayer. Residues 51–57 (LDSHLHT) are Cytoplasmic-facing. A helical membrane pass occupies residues 58 to 79 (PMYLFLSNLSFADLCFSSVTMP). Residues 80–100 (KLLQNMQSQVPSIPYAGCLAQ) lie on the Extracellular side of the membrane. Cysteines 97 and 189 form a disulfide. The chain crosses the membrane as a helical span at residues 101-120 (IYFFLFFGDLGNFLLVAMAY). Topologically, residues 121–139 (DRYVAICFPLHYMSIMSPK) are cytoplasmic. A helical transmembrane segment spans residues 140 to 158 (LCVSLVVLSWVLTTFHAML). At 159–196 (HTLLMARLSFCEDSVIPHYFCDMSTLLKVACSDTHDNE) the chain is on the extracellular side. A helical membrane pass occupies residues 197–219 (LAIFILGGPIVVLPFLLIIVSYA). The Cytoplasmic portion of the chain corresponds to 220–236 (RIVSSIFKVPSSQSIHK). A helical transmembrane segment spans residues 237–260 (AFSTCGSHLSVVSLFYGTVIGLYL). Topologically, residues 261–272 (CPSANNSTVKET) are extracellular. A helical membrane pass occupies residues 273-292 (VMSLMYTMVTPMLNPFIYSL). Residues 293-314 (RNRDIKDALEKIMCKKQIPSFL) lie on the Cytoplasmic side of the membrane.

Belongs to the G-protein coupled receptor 1 family. Olfactory epithelium.

Its subcellular location is the cell membrane. Odorant receptor. This chain is Olfactory receptor-like protein I9, found in Rattus norvegicus (Rat).